Here is a 435-residue protein sequence, read N- to C-terminus: tRNA modification GTPase MnmE (435 aa).

Residues Arg20, Glu77, and Lys117 each contribute to the (6S)-5-formyl-5,6,7,8-tetrahydrofolate site. Residues 214–359 (GFKIVIVGAP…FMKELESFCL (146 aa)) form the TrmE-type G domain. GTP contacts are provided by residues 224-229 (NSGKSS), 243-249 (TEEAGTT), and 268-271 (DTAG). Mg(2+)-binding residues include Ser228 and Thr249. Position 435 (Lys435) interacts with (6S)-5-formyl-5,6,7,8-tetrahydrofolate.

Belongs to the TRAFAC class TrmE-Era-EngA-EngB-Septin-like GTPase superfamily. TrmE GTPase family. In terms of assembly, homodimer. Heterotetramer of two MnmE and two MnmG subunits. K(+) is required as a cofactor.

The protein localises to the cytoplasm. In terms of biological role, exhibits a very high intrinsic GTPase hydrolysis rate. Involved in the addition of a carboxymethylaminomethyl (cmnm) group at the wobble position (U34) of certain tRNAs, forming tRNA-cmnm(5)s(2)U34. This is tRNA modification GTPase MnmE from Bartonella henselae (strain ATCC 49882 / DSM 28221 / CCUG 30454 / Houston 1) (Rochalimaea henselae).